Here is a 500-residue protein sequence, read N- to C-terminus: Lysine--tRNA ligase (500 aa).

The Mg(2+) site is built by glutamate 410 and glutamate 417.

This sequence belongs to the class-II aminoacyl-tRNA synthetase family. In terms of assembly, homodimer. The cofactor is Mg(2+).

It is found in the cytoplasm. It catalyses the reaction tRNA(Lys) + L-lysine + ATP = L-lysyl-tRNA(Lys) + AMP + diphosphate. The chain is Lysine--tRNA ligase from Shewanella loihica (strain ATCC BAA-1088 / PV-4).